Consider the following 42-residue polypeptide: Potassium channel toxin gamma-KTx 1.4 (42 aa).

Intrachain disulfides connect Cys-5–Cys-23, Cys-11–Cys-34, Cys-20–Cys-39, and Cys-24–Cys-41.

Belongs to the ergtoxin family. Gamma-KTx 1 subfamily. Expressed by the venom gland.

It is found in the secreted. In terms of biological role, blocks Kv11/ERG potassium channels. The sequence is that of Potassium channel toxin gamma-KTx 1.4 from Centruroides sculpturatus (Arizona bark scorpion).